A 351-amino-acid polypeptide reads, in one-letter code: MTISAVPGTIILAIETSCDETGVGIACLDDYGTVTLLADEVASSVDEQARFGGVVPEIASRAHLEALGPTIRCALAAAGLTGSAKPDVVAATIGPGLAGALLVGVAAAKAYSAAWGVPFYAVNHLGGHLAADVYEHGPLPECVALLVSGGHTHLLQVRSLGAPIVELGSTVDDAAGEAYDKVARLLGLGYPGGKVLDDLARTGDRDAIVFPRGMTGPADDLNAFSFSGLKTAVARYVESHPDALPADVAAGFQEAVADVLTMKAVRAATGLGVSTLLIVGGVAANSRLRELAAQRCAAAGLMLRIPGPRFCTDNGAMIAAFAAHLLAAAAPPSPLDVPSDPGLPVVKRQIN.

Histidine 124 and histidine 128 together coordinate Fe cation. Substrate is bound by residues 146-150 (LVSGG), aspartate 180, glycine 193, aspartate 197, and asparagine 285. Aspartate 313 is a Fe cation binding site.

It belongs to the KAE1 / TsaD family. It depends on Fe(2+) as a cofactor.

The protein localises to the cytoplasm. The enzyme catalyses L-threonylcarbamoyladenylate + adenosine(37) in tRNA = N(6)-L-threonylcarbamoyladenosine(37) in tRNA + AMP + H(+). Functionally, required for the formation of a threonylcarbamoyl group on adenosine at position 37 (t(6)A37) in tRNAs that read codons beginning with adenine. Is involved in the transfer of the threonylcarbamoyl moiety of threonylcarbamoyl-AMP (TC-AMP) to the N6 group of A37, together with TsaE and TsaB. TsaD likely plays a direct catalytic role in this reaction. This is tRNA N6-adenosine threonylcarbamoyltransferase from Mycobacterium leprae (strain TN).